A 266-amino-acid polypeptide reads, in one-letter code: Interleukin-1 beta (266 aa).

Positions 1–114 (MAAVPELSSE…DTWDEEYESD (114 aa)) are excised as a propeptide.

The protein belongs to the IL-1 family. As to quaternary structure, monomer. In its precursor form, weakly interacts with full-length MEFV; the mature cytokine does not interact at all. Interacts with integrins ITGAV:ITGBV and ITGA5:ITGB1; integrin-binding is required for IL1B signaling. Interacts with cargo receptor TMED10; the interaction is direct and is required for the secretion of IL1B mature form. Interacts with HSP90AB1; the interaction facilitates cargo translocation into the ERGIC. Interacts with HSP90B1; the interaction facilitates cargo translocation into the ERGIC.

The protein localises to the cytoplasm. It localises to the cytosol. The protein resides in the secreted. Its subcellular location is the lysosome. It is found in the extracellular exosome. Its function is as follows. Potent pro-inflammatory cytokine. Initially discovered as the major endogenous pyrogen, induces prostaglandin synthesis, neutrophil influx and activation, T-cell activation and cytokine production, B-cell activation and antibody production, and fibroblast proliferation and collagen production. Promotes Th17 differentiation of T-cells. Synergizes with IL12/interleukin-12 to induce IFNG synthesis from T-helper 1 (Th1) cells. Plays a role in angiogenesis by inducing VEGF production synergistically with TNF and IL6. Involved in transduction of inflammation downstream of pyroptosis: its mature form is specifically released in the extracellular milieu by passing through the gasdermin-D (GSDMD) pore. This Cavia porcellus (Guinea pig) protein is Interleukin-1 beta (IL1B).